A 432-amino-acid polypeptide reads, in one-letter code: Lysosomal acid phosphatase (432 aa).

Positions Met-1 to Ser-32 are cleaved as a signal peptide. Residues Arg-33–Thr-384 are Lumenal-facing. His-44 functions as the Nucleophile in the catalytic mechanism. 5 N-linked (GlcNAc...) asparagine glycosylation sites follow: Asn-94, Asn-135, Asn-179, Asn-193, and Asn-269. Disulfide bonds link Cys-161–Cys-373, Cys-214–Cys-313, and Cys-348–Cys-352. Asp-290 functions as the Proton donor in the catalytic mechanism. Residues Asn-325 and Asn-334 are each glycosylated (N-linked (GlcNAc...) asparagine). Residues Ile-385–Leu-405 form a helical membrane-spanning segment. Topologically, residues Ser-406–Met-432 are cytoplasmic.

This sequence belongs to the histidine acid phosphatase family. The membrane-bound form is converted to the soluble form by sequential proteolytic processing. First, the C-terminal cytoplasmic tail is removed. Cleavage by a lysosomal protease releases the soluble form in the lysosome lumen.

Its subcellular location is the lysosome membrane. The protein localises to the lysosome lumen. It catalyses the reaction a phosphate monoester + H2O = an alcohol + phosphate. The protein is Lysosomal acid phosphatase (acp2) of Xenopus laevis (African clawed frog).